Here is a 297-residue protein sequence, read N- to C-terminus: Phosphatidylserine decarboxylase proenzyme (297 aa).

Catalysis depends on charge relay system; for autoendoproteolytic cleavage activity residues Asp112, His168, and Ser255. The active-site Schiff-base intermediate with substrate; via pyruvic acid; for decarboxylase activity is the Ser255. The residue at position 255 (Ser255) is a Pyruvic acid (Ser); by autocatalysis.

Belongs to the phosphatidylserine decarboxylase family. PSD-B subfamily. Prokaryotic type II sub-subfamily. As to quaternary structure, heterodimer of a large membrane-associated beta subunit and a small pyruvoyl-containing alpha subunit. Pyruvate is required as a cofactor. Is synthesized initially as an inactive proenzyme. Formation of the active enzyme involves a self-maturation process in which the active site pyruvoyl group is generated from an internal serine residue via an autocatalytic post-translational modification. Two non-identical subunits are generated from the proenzyme in this reaction, and the pyruvate is formed at the N-terminus of the alpha chain, which is derived from the carboxyl end of the proenzyme. The autoendoproteolytic cleavage occurs by a canonical serine protease mechanism, in which the side chain hydroxyl group of the serine supplies its oxygen atom to form the C-terminus of the beta chain, while the remainder of the serine residue undergoes an oxidative deamination to produce ammonia and the pyruvoyl prosthetic group on the alpha chain. During this reaction, the Ser that is part of the protease active site of the proenzyme becomes the pyruvoyl prosthetic group, which constitutes an essential element of the active site of the mature decarboxylase.

Its subcellular location is the cell membrane. It catalyses the reaction a 1,2-diacyl-sn-glycero-3-phospho-L-serine + H(+) = a 1,2-diacyl-sn-glycero-3-phosphoethanolamine + CO2. The protein operates within phospholipid metabolism; phosphatidylethanolamine biosynthesis; phosphatidylethanolamine from CDP-diacylglycerol: step 2/2. Functionally, catalyzes the formation of phosphatidylethanolamine (PtdEtn) from phosphatidylserine (PtdSer). The protein is Phosphatidylserine decarboxylase proenzyme of Clostridium tetani (strain Massachusetts / E88).